Here is a 231-residue protein sequence, read N- to C-terminus: Probable transglycosylase SceD (231 aa).

Residues 1 to 27 (MKKTLLASSLAVGLGIVAGNAGHEAQA) form the signal peptide. The interval 92–153 (MSAQAPATNN…ESKASEGSSV (62 aa)) is disordered. The segment covering 96-116 (APATNNVAPSADQSNQVQSQE) has biased composition (polar residues). A compositionally biased stretch (low complexity) spans 119 to 137 (APQNAQTQQPQASTSNNSQ). A compositionally biased stretch (polar residues) spans 138–153 (VTATPTESKASEGSSV).

It belongs to the transglycosylase family. SceD subfamily.

It is found in the secreted. In terms of biological role, is able to cleave peptidoglycan and affects clumping and separation of bacterial cells. The protein is Probable transglycosylase SceD (sceD) of Staphylococcus aureus (strain MRSA252).